The sequence spans 1768 residues: Callose synthase 11 (1768 aa).

The Cytoplasmic segment spans residues 1–308 (MRRQRPSVAT…WNVYRSFDRL (308 aa)). The chain crosses the membrane as a helical span at residues 309–329 (WILLLLYLQAAIIVATSDVKF). Residues 330–335 (PWQDRD) are Extracellular-facing. Residues 336 to 356 (VEVALLTVFISWAGLRLLQSV) traverse the membrane as a helical segment. Residues 357-370 (LDASTQYSLVSRET) are Cytoplasmic-facing. The chain crosses the membrane as a helical span at residues 371 to 391 (YWLFIRLTLKFVVAVAWTVLF). Residues 392–421 (SVFYARIWSQKNKDGVWSRAANERVVTFLK) are Extracellular-facing. The helical transmembrane segment at 422 to 442 (VVFVYVIPELLALVLFIVPCI) threads the bilayer. The Cytoplasmic portion of the chain corresponds to 443 to 480 (RNWVEELNLGVVYFLTWWFYSKTFVGRGMREGLVDNVK). Residues 481-501 (YTLFWIIVLATKFIFSYFLQI) traverse the membrane as a helical segment. Topologically, residues 502-530 (RPLIAPTRALLNLKDATYNWHEFFGSTHR) are extracellular. A helical membrane pass occupies residues 531–551 (IAVGMLWLPVILVYLMDLQIW). Over 552-1341 (YSIYSSLVGA…FFRMLSFFYT (790 aa)) the chain is Cytoplasmic. A helical membrane pass occupies residues 1342 to 1362 (TVGYYFNTMLIVFTVYAFLWG). At 1363–1386 (RLYLALSGVEKIAKDRSSSNEALG) the chain is on the extracellular side. The helical transmembrane segment at 1387–1407 (AILNQQFIIQLGLFTALPMIL) threads the bilayer. Topologically, residues 1408-1413 (ENSLER) are cytoplasmic. Residues 1414-1434 (GFLPAVWDFITMQLQLASFFY) form a helical membrane-spanning segment. Over 1435–1481 (TFSMGTRTHYFGRTILHGGAKYRATGRGFVVEHKKFAENYRLYARTH) the chain is Extracellular. A helical membrane pass occupies residues 1482–1502 (FIKAIELAIILLVYAAYSPLA). Topologically, residues 1503 to 1508 (KSSFVY) are cytoplasmic. A helical transmembrane segment spans residues 1509–1529 (ILMTISSWFLITSWIISPFLF). Topologically, residues 1530–1583 (NPSGFDWLKTVNDFDDFIAWLWSRGGLFTKADQSWFTWWNEEQEHLKTTGVWGK) are extracellular. The chain crosses the membrane as a helical span at residues 1584 to 1604 (LLEIILDLRFFFFQYSIVYHL). Residues 1605 to 1612 (RIAENRTS) lie on the Cytoplasmic side of the membrane. A helical transmembrane segment spans residues 1613–1633 (IGVYLISWGCIIGIVAIYITT). The Extracellular segment spans residues 1634-1649 (IYAQKRYSVKEHIKYR). A helical membrane pass occupies residues 1650–1670 (FIQFLVILLTVLVVVMMLQFT). At 1671–1673 (KLT) the chain is on the cytoplasmic side. A helical membrane pass occupies residues 1674–1694 (VVDLLISLLAFVPTGWGLISI). Over 1695–1719 (AQVLKPFLLSTVVWDTVISVARFYD) the chain is Extracellular. Residues 1720 to 1740 (LFFGLIVMAPVALLSWLPGFQ) form a helical membrane-spanning segment. Residues 1741–1768 (NMQTRILFNEAFSRGLQISIILAGKKST) are Cytoplasmic-facing.

The protein belongs to the glycosyltransferase 48 family. In terms of tissue distribution, ubiquitous.

The protein resides in the cell membrane. It catalyses the reaction [(1-&gt;3)-beta-D-glucosyl](n) + UDP-alpha-D-glucose = [(1-&gt;3)-beta-D-glucosyl](n+1) + UDP + H(+). Required the formation of the callose wall separating the tetraspores (interstitial wall), but not for the callose wall surrounding the pollen mother cells (peripheral wall). Functionally redudant to CALS12 (GSL5). During plant growth and development, callose is found as a transitory component of the cell plate in dividing cells, is a major component of pollen mother cell walls and pollen tubes, and is found as a structural component of plasmodesmatal canals. The sequence is that of Callose synthase 11 (CALS11) from Arabidopsis thaliana (Mouse-ear cress).